A 283-amino-acid polypeptide reads, in one-letter code: Elongation factor Ts (283 aa).

Positions threonine 80 to valine 83 are involved in Mg(2+) ion dislocation from EF-Tu.

The protein belongs to the EF-Ts family.

The protein resides in the cytoplasm. Its function is as follows. Associates with the EF-Tu.GDP complex and induces the exchange of GDP to GTP. It remains bound to the aminoacyl-tRNA.EF-Tu.GTP complex up to the GTP hydrolysis stage on the ribosome. This chain is Elongation factor Ts, found in Salmonella paratyphi A (strain ATCC 9150 / SARB42).